The sequence spans 33 residues: Cyanophlyctin-beta (33 aa).

Cys-27 and Cys-33 are joined by a disulfide.

As to expression, expressed by the skin glands.

Its subcellular location is the secreted. In terms of biological role, antimicrobial peptide active against E.coli (MIC=5 uM), K.pneumoniae (MIC=10 uM), B.cereus (MIC=7 uM) and S.aureus (MIC=12 uM). Has very little hemolytic activity. The chain is Cyanophlyctin-beta from Euphlyctis cyanophlyctis (Skittering frog).